The chain runs to 312 residues: Malate dehydrogenase (312 aa).

Residues 7 to 13 (GASGGIG) and aspartate 34 contribute to the NAD(+) site. Arginine 81 and arginine 87 together coordinate substrate. Residues asparagine 94 and 117–119 (ITN) contribute to the NAD(+) site. 2 residues coordinate substrate: asparagine 119 and arginine 153. Histidine 177 functions as the Proton acceptor in the catalytic mechanism. Methionine 227 is an NAD(+) binding site.

It belongs to the LDH/MDH superfamily. MDH type 1 family. As to quaternary structure, homodimer.

The enzyme catalyses (S)-malate + NAD(+) = oxaloacetate + NADH + H(+). Catalyzes the reversible oxidation of malate to oxaloacetate. The sequence is that of Malate dehydrogenase from Actinobacillus succinogenes (strain ATCC 55618 / DSM 22257 / CCUG 43843 / 130Z).